We begin with the raw amino-acid sequence, 315 residues long: S-methyl-5'-thioadenosine phosphorylase (315 aa).

Residues S22, 65–66 (RH), and 98–99 (SA) contribute to the phosphate site. M205 contacts substrate. S206 is a binding site for phosphate. 229 to 231 (DYD) serves as a coordination point for substrate.

Belongs to the PNP/MTAP phosphorylase family. MTAP subfamily. In terms of assembly, homotrimer.

The protein resides in the cytoplasm. It is found in the nucleus. The catalysed reaction is S-methyl-5'-thioadenosine + phosphate = 5-(methylsulfanyl)-alpha-D-ribose 1-phosphate + adenine. It participates in amino-acid biosynthesis; L-methionine biosynthesis via salvage pathway; S-methyl-5-thio-alpha-D-ribose 1-phosphate from S-methyl-5'-thioadenosine (phosphorylase route): step 1/1. Catalyzes the reversible phosphorylation of S-methyl-5'-thioadenosine (MTA) to adenine and 5-methylthioribose-1-phosphate. Involved in the breakdown of MTA, a major by-product of polyamine biosynthesis. Responsible for the first step in the methionine salvage pathway after MTA has been generated from S-adenosylmethionine. Has broad substrate specificity with 6-aminopurine nucleosides as preferred substrates. The protein is S-methyl-5'-thioadenosine phosphorylase of Mycosarcoma maydis (Corn smut fungus).